We begin with the raw amino-acid sequence, 143 residues long: Photosystem II extrinsic protein U (143 aa).

Positions Met1–Ala29 are cleaved as a signal peptide. Positions Ala30–Ala44 are excised as a propeptide.

Belongs to the PsbU family. In terms of assembly, PSII is composed of 1 copy each of membrane proteins PsbA, PsbB, PsbC, PsbD, PsbE, PsbF, PsbH, PsbI, PsbJ, PsbK, PsbL, PsbM, PsbT, PsbX, PsbY, PsbZ, Psb30/Ycf12, peripheral proteins PsbO, CyanoQ (PsbQ), PsbU, PsbV and a large number of cofactors. It forms dimeric complexes.

The protein resides in the cellular thylakoid membrane. One of the extrinsic, lumenal subunits of photosystem II (PSII). PSII is a light-driven water plastoquinone oxidoreductase, using light energy to abstract electrons from H(2)O, generating a proton gradient subsequently used for ATP formation. The extrinsic proteins stabilize the structure of photosystem II oxygen-evolving complex (OEC), the ion environment of oxygen evolution and protect the OEC against heat-induced inactivation. The protein is Photosystem II extrinsic protein U of Leptolyngbya laminosa (Phormidium laminosum).